The following is a 240-amino-acid chain: Urease accessory protein UreD (240 aa).

The protein belongs to the UreD family. UreD, UreF and UreG form a complex that acts as a GTP-hydrolysis-dependent molecular chaperone, activating the urease apoprotein by helping to assemble the nickel containing metallocenter of UreC. The UreE protein probably delivers the nickel.

The protein localises to the cytoplasm. In terms of biological role, required for maturation of urease via the functional incorporation of the urease nickel metallocenter. The protein is Urease accessory protein UreD of Granulibacter bethesdensis (strain ATCC BAA-1260 / CGDNIH1).